Reading from the N-terminus, the 446-residue chain is Exodeoxyribonuclease 7 large subunit (446 aa).

This sequence belongs to the XseA family. In terms of assembly, heterooligomer composed of large and small subunits.

It is found in the cytoplasm. The catalysed reaction is Exonucleolytic cleavage in either 5'- to 3'- or 3'- to 5'-direction to yield nucleoside 5'-phosphates.. Functionally, bidirectionally degrades single-stranded DNA into large acid-insoluble oligonucleotides, which are then degraded further into small acid-soluble oligonucleotides. The sequence is that of Exodeoxyribonuclease 7 large subunit from Ligilactobacillus salivarius (strain UCC118) (Lactobacillus salivarius).